Reading from the N-terminus, the 283-residue chain is Large ribosomal subunit protein uL2c (283 aa).

Residues 229 to 274 (GVVMNPIDHPHGGGEGKVPIGRKKPLTPWGHPALGRKSRKRRKYSD) are disordered. Residues 262–271 (LGRKSRKRRK) are compositionally biased toward basic residues.

Belongs to the universal ribosomal protein uL2 family. In terms of assembly, part of the 50S ribosomal subunit.

It is found in the plastid. The polypeptide is Large ribosomal subunit protein uL2c (rpl2) (Aneura mirabilis (Parasitic liverwort)).